Consider the following 552-residue polypeptide: NADH-ubiquinone oxidoreductase chain 5 (552 aa).

15 consecutive transmembrane segments (helical) span residues 11–31 (PVTI…PFGL), 36–56 (LAMT…AYAI), 68–88 (FYII…SDNY), 89–109 (LMMF…ISFW), 121–141 (SAIL…GLMI), 152–172 (IALV…LLLL), 196–216 (TPVS…YVLV), 229–249 (LLII…IAIV), 256–274 (VIAL…AIGI), 287–307 (HAFF…SFVA), 322–342 (LPFS…IPGL), 365–386 (ILYY…RVLY), 406–426 (SLGM…IGYS), 453–473 (AYIK…LVYV), and 532–552 (SRAV…LFFI).

It belongs to the complex I subunit 5 family.

The protein resides in the mitochondrion inner membrane. The enzyme catalyses a ubiquinone + NADH + 5 H(+)(in) = a ubiquinol + NAD(+) + 4 H(+)(out). Its function is as follows. Core subunit of the mitochondrial membrane respiratory chain NADH dehydrogenase (Complex I) that is believed to belong to the minimal assembly required for catalysis. Complex I functions in the transfer of electrons from NADH to the respiratory chain. The immediate electron acceptor for the enzyme is believed to be ubiquinone. The sequence is that of NADH-ubiquinone oxidoreductase chain 5 (NAD5) from Candida albicans (strain SC5314 / ATCC MYA-2876) (Yeast).